The primary structure comprises 229 residues: Potassium/proton antiporter CemA (229 aa).

3 helical membrane-spanning segments follow: residues 7–27 (FTPLFYLASIVFLPWWISFSV), 107–127 (ILHFSTNIICFIILSGYSILG), and 189–209 (IISGLVSTFPVILDTIFKYWI).

It belongs to the CemA family.

The protein localises to the plastid. It is found in the chloroplast inner membrane. It catalyses the reaction K(+)(in) + H(+)(out) = K(+)(out) + H(+)(in). Contributes to K(+)/H(+) antiport activity by supporting proton efflux to control proton extrusion and homeostasis in chloroplasts in a light-dependent manner to modulate photosynthesis. Prevents excessive induction of non-photochemical quenching (NPQ) under continuous-light conditions. Indirectly promotes efficient inorganic carbon uptake into chloroplasts. The chain is Potassium/proton antiporter CemA from Atropa belladonna (Belladonna).